The chain runs to 637 residues: MSNSQANAGISGSTVADEPIQHHPSLAAGPVSASCPAATPPSQSTQQPPPHIVSASTADAGSSAAVGVGVVAGSEGVNLDSSPRESGDDSEDESEILEESPCGRWLKRREEVDQRDVPGIDCVHLAMDTEEGVEVVWNEVQYASLQELKSQEEKMRQVFDNLLQLDHQNIVKFHRYWTDTQQAERPRVVFITEYMSSGSLKQFLKRTKRNAKRLPLESWRRWCTQILSALSYLHSCSPPIIHGNLTCDSIFIQHNGLVKIGSVVPDAVHYSVRRGRERERERERGAHYFQAPEYGAADQLTAALDIYAFGMCALEMAALEIQPSNSESTAINEETIQRTIFSLENDLQRDLIRKCLNPQPQDRPSANDLLFHPLLFEVHSLKLLTAHCLVFSPANRTMFSETAFDGLMQRYYQPDVVMAQLRLAGGQERQYRLADVSGADKLEKFVEDVKYGVYPLITYSGKKPPNFRSRAASPERADSVKSATPEPVDTESRRIVNMMCSVKIKEDSNDITMTILLRMDDKMNRQLTCQVNENDTAADLTSELVRLGFVHLDDQDKIQVLLEETLKAGVMSDGAGAESSGAGVTTTATMAALEQLERNWSISSDADKQGTAVMYVPQEQQNADGDVDVEHSGTTSN.

Polar residues predominate over residues 1–14; that stretch reads MSNSQANAGISGST. 2 disordered regions span residues 1 to 60 and 74 to 99; these read MSNS…TADA and SEGV…ILEE. Positions 36 to 46 are enriched in low complexity; that stretch reads PAATPPSQSTQ. Over residues 88–98 the composition is skewed to acidic residues; the sequence is DDSEDESEILE. Positions 109–375 constitute a Protein kinase domain; that stretch reads REEVDQRDVP…ANDLLFHPLL (267 aa). Disordered regions lie at residues 465–489 and 617–637; these read PNFR…EPVD and PQEQ…TTSN. Phosphoserine is present on residues serine 473, serine 479, and serine 482. Threonine 484 is modified (phosphothreonine).

Belongs to the protein kinase superfamily. Ser/Thr protein kinase family.

It is found in the cytoplasm. The protein resides in the cell cortex. Functionally, may play a role in subcellular trafficking between the endoplasmic reticulum and Golgi apparatus. In Drosophila melanogaster (Fruit fly), this protein is Nuclear receptor-binding protein homolog.